The chain runs to 225 residues: Orotate phosphoribosyltransferase (225 aa).

Lysine 31 lines the 5-phospho-alpha-D-ribose 1-diphosphate pocket. 39–40 (FF) contacts orotate. Residues 78–79 (YK), arginine 105, lysine 106, lysine 109, histidine 111, and 130–138 (DDVLTSGKA) contribute to the 5-phospho-alpha-D-ribose 1-diphosphate site. Threonine 134 and arginine 163 together coordinate orotate.

This sequence belongs to the purine/pyrimidine phosphoribosyltransferase family. PyrE subfamily. As to quaternary structure, homodimer.

It carries out the reaction orotidine 5'-phosphate + diphosphate = orotate + 5-phospho-alpha-D-ribose 1-diphosphate. Its pathway is pyrimidine metabolism; UMP biosynthesis via de novo pathway; UMP from orotate: step 1/2. Functionally, catalyzes the transfer of a ribosyl phosphate group from 5-phosphoribose 1-diphosphate to orotate, leading to the formation of orotidine monophosphate (OMP). This chain is Orotate phosphoribosyltransferase (URA5), found in Cryptococcus neoformans var. neoformans serotype D (strain B-3501A) (Filobasidiella neoformans).